The chain runs to 516 residues: L-amino-acid oxidase (516 aa).

A signal peptide spans 1–18; the sequence is MNVFFMFSLLFLAALGSC. Cys28 and Cys189 are joined by a disulfide. FAD-binding positions include 61-62, 81-82, Arg89, and 103-106; these read MA, EA, and GPMR. 2 residues coordinate substrate: Arg106 and His239. Val279 contributes to the FAD binding site. A disulfide bond links Cys349 and Cys430. Asn379 is a glycosylation site (N-linked (GlcNAc...) asparagine). Residue Tyr390 participates in substrate binding. FAD-binding positions include Glu475 and 482 to 487; that span reads GWIDST. 482–483 contacts substrate; sequence GW.

The protein belongs to the flavin monoamine oxidase family. FIG1 subfamily. In terms of assembly, homodimer; non-covalently linked. Requires FAD as cofactor. In terms of tissue distribution, expressed by the venom gland.

Its subcellular location is the secreted. It catalyses the reaction an L-alpha-amino acid + O2 + H2O = a 2-oxocarboxylate + H2O2 + NH4(+). Catalyzes an oxidative deamination of predominantly hydrophobic and aromatic L-amino acids, thus producing hydrogen peroxide that may contribute to the diverse toxic effects of this enzyme. Exhibits diverse biological activities, such as hemolysis, edema, hemorrhage, apoptosis, antibacterial and antiparasitic activities, as well as regulation of platelet aggregation. Effects of snake L-amino oxidases on platelets are controversial, since they either induce aggregation or inhibit agonist-induced aggregation. These different effects are probably due to different experimental conditions. This is L-amino-acid oxidase from Crotalus adamanteus (Eastern diamondback rattlesnake).